A 106-amino-acid chain; its full sequence is Large ribosomal subunit protein bL21 (106 aa).

Belongs to the bacterial ribosomal protein bL21 family. Part of the 50S ribosomal subunit. Contacts protein L20.

This protein binds to 23S rRNA in the presence of protein L20. This is Large ribosomal subunit protein bL21 from Dichelobacter nodosus (strain VCS1703A).